Consider the following 324-residue polypeptide: COP9 signalosome complex subunit 6 (324 aa).

One can recognise an MPN domain in the interval 38 to 171 (VALHPLVILN…VSVFESVIDI (134 aa)).

The protein belongs to the peptidase M67A family. CSN6 subfamily. Component of the CSN complex, composed of COPS1/GPS1, COPS2, COPS3, COPS4, COPS5, COPS6, COPS7 (COPS7A or COPS7B), COPS8 and COPS9. In the complex, it probably interacts directly with COPS2, COPS4, COPS5, COPS7 (COPS7A or COPS7B) and COPS9. Interacts with the translation initiation factor EIF3S6. Interacts weakly with RBX1. Directly interacts with COP1 and 14-3-3 protein sigma/SFN. Interacts with ERCC6.

The protein localises to the cytoplasm. Its subcellular location is the nucleus. Component of the COP9 signalosome complex (CSN), a complex involved in various cellular and developmental processes. The CSN complex is an essential regulator of the ubiquitin (Ubl) conjugation pathway by mediating the deneddylation of the cullin subunits of SCF-type E3 ligase complexes, leading to decrease the Ubl ligase activity of SCF-type complexes such as SCF, CSA or DDB2. The complex is also involved in phosphorylation of p53/TP53, c-jun/JUN, IkappaBalpha/NFKBIA, ITPK1 and IRF8, possibly via its association with CK2 and PKD kinases. CSN-dependent phosphorylation of TP53 and JUN promotes and protects degradation by the Ubl system, respectively. Has some glucocorticoid receptor-responsive activity. Stabilizes COP1 through reducing COP1 auto-ubiquitination and decelerating COP1 turnover rate, hence regulates the ubiquitination of COP1 targets, including SFN. This is COP9 signalosome complex subunit 6 (Cops6) from Mus musculus (Mouse).